The following is a 569-amino-acid chain: CUE domain-containing protein 5 (569 aa).

The CUE domain maps to 17-60 (MAEKARATLKEAFPNTDDAIIRAVLAASGYKLEPAFNALLGLSD). Disordered stretches follow at residues 67 to 139 (MEQA…DDYS), 175 to 275 (DGEE…SSSA), and 311 to 569 (EELE…GKET). The span at 79 to 100 (AAHDDPVQRQLEEDERCARELA) shows a compositional bias: basic and acidic residues. Positions 104-113 (NSHRPERRRK) are enriched in basic residues. A compositionally biased stretch (basic and acidic residues) spans 234–249 (SDPHMLNEKDFERLRL). Over residues 250 to 274 (ESSSSPMMRRSSLNSNRRSVESSSS) the composition is skewed to low complexity. A compositionally biased stretch (basic and acidic residues) spans 329–340 (VVVEKKPDESRK). Residues 347-364 (ETVSEEQMGSSNAKSKVL) are compositionally biased toward polar residues. Composition is skewed to basic and acidic residues over residues 367-381 (EPKD…KTET), 399-500 (ISEK…KETD), and 507-558 (KEEK…KIEE).

It localises to the cytoplasm. This chain is CUE domain-containing protein 5, found in Schizosaccharomyces pombe (strain 972 / ATCC 24843) (Fission yeast).